We begin with the raw amino-acid sequence, 318 residues long: SPX domain-containing protein 4 (318 aa).

Residues 1 to 187 form the SPX domain; the sequence is MKFGKEFRTH…GGLLRLPFTQ (187 aa). Residues 226–237 show a composition bias toward low complexity; it reads SAVQAHSSSHQH. 2 disordered regions span residues 226-247 and 284-318; these read SAVQAHSSSHQHNSPRISAETS and SSLLQNEDDETVTAENSPNSGNKDDSEKEDTGPSH. Basic and acidic residues predominate over residues 305–318; the sequence is NKDDSEKEDTGPSH.

In Arabidopsis thaliana (Mouse-ear cress), this protein is SPX domain-containing protein 4 (SPX4).